The primary structure comprises 421 residues: Imidazolonepropionase (421 aa).

2 residues coordinate Fe(3+): histidine 81 and histidine 83. Residues histidine 81 and histidine 83 each contribute to the Zn(2+) site. Residues arginine 90, tyrosine 153, and histidine 186 each contribute to the 4-imidazolone-5-propanoate site. Residue tyrosine 153 coordinates N-formimidoyl-L-glutamate. Histidine 251 lines the Fe(3+) pocket. Histidine 251 lines the Zn(2+) pocket. 4-imidazolone-5-propanoate is bound at residue glutamate 254. Aspartate 326 contributes to the Fe(3+) binding site. Residue aspartate 326 coordinates Zn(2+). Residues asparagine 328 and glycine 330 each coordinate N-formimidoyl-L-glutamate. Serine 331 provides a ligand contact to 4-imidazolone-5-propanoate.

Belongs to the metallo-dependent hydrolases superfamily. HutI family. Zn(2+) serves as cofactor. The cofactor is Fe(3+).

It localises to the cytoplasm. The enzyme catalyses 4-imidazolone-5-propanoate + H2O = N-formimidoyl-L-glutamate. Its pathway is amino-acid degradation; L-histidine degradation into L-glutamate; N-formimidoyl-L-glutamate from L-histidine: step 3/3. Its function is as follows. Catalyzes the hydrolytic cleavage of the carbon-nitrogen bond in imidazolone-5-propanoate to yield N-formimidoyl-L-glutamate. It is the third step in the universal histidine degradation pathway. The protein is Imidazolonepropionase of Streptococcus pyogenes serotype M4 (strain MGAS10750).